We begin with the raw amino-acid sequence, 349 residues long: Protein-glutamate methylesterase/protein-glutamine glutaminase (349 aa).

A Response regulatory domain is found at 5-122 (RVLSVDDSAL…REGMLAYSEM (118 aa)). 4-aspartylphosphate is present on Asp56. In terms of domain architecture, CheB-type methylesterase spans 152–344 (LLSSEKLIAI…QQMLAKISAG (193 aa)). Catalysis depends on residues Ser164, His190, and Asp286.

This sequence belongs to the CheB family. Phosphorylated by CheA. Phosphorylation of the N-terminal regulatory domain activates the methylesterase activity.

The protein resides in the cytoplasm. The enzyme catalyses [protein]-L-glutamate 5-O-methyl ester + H2O = L-glutamyl-[protein] + methanol + H(+). The catalysed reaction is L-glutaminyl-[protein] + H2O = L-glutamyl-[protein] + NH4(+). In terms of biological role, involved in chemotaxis. Part of a chemotaxis signal transduction system that modulates chemotaxis in response to various stimuli. Catalyzes the demethylation of specific methylglutamate residues introduced into the chemoreceptors (methyl-accepting chemotaxis proteins or MCP) by CheR. Also mediates the irreversible deamidation of specific glutamine residues to glutamic acid. This is Protein-glutamate methylesterase/protein-glutamine glutaminase from Escherichia coli O6:H1 (strain CFT073 / ATCC 700928 / UPEC).